Consider the following 313-residue polypeptide: Methionyl-tRNA formyltransferase (313 aa).

113-116 (SLLP) contacts (6S)-5,6,7,8-tetrahydrofolate.

It belongs to the Fmt family.

The enzyme catalyses L-methionyl-tRNA(fMet) + (6R)-10-formyltetrahydrofolate = N-formyl-L-methionyl-tRNA(fMet) + (6S)-5,6,7,8-tetrahydrofolate + H(+). Its function is as follows. Attaches a formyl group to the free amino group of methionyl-tRNA(fMet). The formyl group appears to play a dual role in the initiator identity of N-formylmethionyl-tRNA by promoting its recognition by IF2 and preventing the misappropriation of this tRNA by the elongation apparatus. This is Methionyl-tRNA formyltransferase from Francisella tularensis subsp. holarctica (strain FTNF002-00 / FTA).